We begin with the raw amino-acid sequence, 433 residues long: Signal recognition particle 54 kDa protein (433 aa).

Residues 106-113 (GVEGSGKT), 186-190 (DTAGR), and 244-247 (TKMD) each bind GTP.

It belongs to the GTP-binding SRP family. SRP54 subfamily. In terms of assembly, part of the signal recognition particle protein translocation system, which is composed of SRP and FtsY. Archaeal SRP consists of a 7S RNA molecule of 300 nucleotides and two protein subunits: SRP54 and SRP19.

It localises to the cytoplasm. It catalyses the reaction GTP + H2O = GDP + phosphate + H(+). Functionally, involved in targeting and insertion of nascent membrane proteins into the cytoplasmic membrane. Binds to the hydrophobic signal sequence of the ribosome-nascent chain (RNC) as it emerges from the ribosomes. The SRP-RNC complex is then targeted to the cytoplasmic membrane where it interacts with the SRP receptor FtsY. This Pyrobaculum islandicum (strain DSM 4184 / JCM 9189 / GEO3) protein is Signal recognition particle 54 kDa protein.